Reading from the N-terminus, the 260-residue chain is UPF0246 protein Bcen2424_2223 (260 aa).

The protein belongs to the UPF0246 family.

This Burkholderia cenocepacia (strain HI2424) protein is UPF0246 protein Bcen2424_2223.